The sequence spans 336 residues: Uridine nucleosidase 1 (336 aa).

Residues D29 and H260 contribute to the active site.

Belongs to the IUNH family. In terms of assembly, homodimer. Component of the NSH heterocomplex made of URH1/NSH1 and URH2/NSH2 which exhibits strong xanthosine nucleosidase activity. Interacts with URH2. Expressed ubiquitously in leaves, flowers, stems, pollen cells, root tip meristem and root vasculature.

Its subcellular location is the cytoplasm. The catalysed reaction is uridine + H2O = D-ribose + uracil. It catalyses the reaction xanthosine + H2O = D-ribose + xanthine. The enzyme catalyses inosine + H2O = hypoxanthine + D-ribose. It carries out the reaction adenosine + H2O = D-ribose + adenine. Functionally, involved in purine and pyrimidine breakdown rather than in pyrimidine salvage, especially in response to dark stress. Together with URH2, required for efficient inosine and xanthosine hydrolytic activities. Unable to use cytidine as a substrate. Can use uridine, inosine, adenosine as well as the cytokinin derivative isopentenyladenine-riboside as substrates. Also hydrolyzes xanthosine with high efficiency. The protein is Uridine nucleosidase 1 of Arabidopsis thaliana (Mouse-ear cress).